The chain runs to 498 residues: Ribose import ATP-binding protein RbsA 1 (498 aa).

ABC transporter domains follow at residues 7–243 (LHIQ…VGRR) and 254–496 (PRGE…IGKS). Residue 39–46 (GENGAGKS) participates in ATP binding.

It belongs to the ABC transporter superfamily. Ribose importer (TC 3.A.1.2.1) family. In terms of assembly, the complex is composed of an ATP-binding protein (RbsA), two transmembrane proteins (RbsC) and a solute-binding protein (RbsB).

The protein localises to the cell inner membrane. The enzyme catalyses D-ribose(out) + ATP + H2O = D-ribose(in) + ADP + phosphate + H(+). Part of the ABC transporter complex RbsABC involved in ribose import. Responsible for energy coupling to the transport system. The sequence is that of Ribose import ATP-binding protein RbsA 1 from Pasteurella multocida (strain Pm70).